Reading from the N-terminus, the 441-residue chain is 23S rRNA (uracil(1939)-C(5))-methyltransferase RlmD (441 aa).

The TRAM domain maps to 10-68 (KPLKQQSLVLDITAMDHHGRGIAKHNNKVCFVSNALPNEQVKATIIADKARYSEAQTHK). [4Fe-4S] cluster is bound by residues cysteine 81, cysteine 87, cysteine 90, and cysteine 169. S-adenosyl-L-methionine-binding residues include glutamine 274, phenylalanine 303, asparagine 308, glutamate 324, aspartate 351, and aspartate 372. Cysteine 398 serves as the catalytic Nucleophile.

The protein belongs to the class I-like SAM-binding methyltransferase superfamily. RNA M5U methyltransferase family. RlmD subfamily.

The catalysed reaction is uridine(1939) in 23S rRNA + S-adenosyl-L-methionine = 5-methyluridine(1939) in 23S rRNA + S-adenosyl-L-homocysteine + H(+). Its function is as follows. Catalyzes the formation of 5-methyl-uridine at position 1939 (m5U1939) in 23S rRNA. The chain is 23S rRNA (uracil(1939)-C(5))-methyltransferase RlmD from Pseudoalteromonas translucida (strain TAC 125).